A 3707-amino-acid polypeptide reads, in one-letter code: CUB and sushi domain-containing protein 3 (3707 aa).

A compositionally biased stretch (basic and acidic residues) spans 1 to 21 (MKGSRKGESRAKESKPREPGT). The segment at 1–22 (MKGSRKGESRAKESKPREPGTR) is disordered. The Cytoplasmic portion of the chain corresponds to 1–42 (MKGSRKGESRAKESKPREPGTRRCAKCGRLDFILKKKMGIKS). The helical transmembrane segment at 43–63 (GFTFWNLVFLLTLSCVKGFIY) threads the bilayer. Residues 64–3630 (TCGGTLKGLN…NQPHGTNSSS (3567 aa)) are Extracellular-facing. Cystine bridges form between cysteine 65/cysteine 91, cysteine 178/cysteine 218, cysteine 204/cysteine 235, and cysteine 241/cysteine 267. Positions 65 to 173 (CGGTLKGLNG…HGFKVYYEEL (109 aa)) constitute a CUB 1 domain. N-linked (GlcNAc...) asparagine glycosylation is found at asparagine 73 and asparagine 90. The Sushi 1 domain maps to 176 to 237 (SSCGNPGVPP…WDFPVPICRA (62 aa)). One can recognise a CUB 2 domain in the interval 241 to 345 (CGGTMRGSSG…RGFSAPYQGS (105 aa)). The disordered stretch occupies residues 388–437 (HRLSEEQRVQVRSLSDSGLDPNTPEDQLSPHQADTQSTSRRPRNAEQIER). The segment covering 411 to 426 (PEDQLSPHQADTQSTS) has biased composition (polar residues). The 62-residue stretch at 484–545 (NLCPDPGEPE…WSDHRPVCKV (62 aa)) folds into the Sushi 2 domain. 6 disulfides stabilise this stretch: cysteine 486–cysteine 526, cysteine 512–cysteine 543, cysteine 548–cysteine 574, cysteine 664–cysteine 704, cysteine 690–cysteine 717, and cysteine 721–cysteine 747. In terms of domain architecture, CUB 3 spans 548-659 (CGSNLQGPSG…VGFKVNYKEI (112 aa)). A Sushi 3 domain is found at 662–719 (ESCGDPGTPLYGIREGDGFSNRDVLRFECQFGFELIGEKSIVCQENNQWSANIPICIF). A CUB 4 domain is found at 721-829 (CLSNFTAPMG…RGFNITYNTF (109 aa)). Asparagine 724 and asparagine 823 each carry an N-linked (GlcNAc...) asparagine glycan. Residues 832–893 (NECPDPGIPI…WSGPIPRCGA (62 aa)) form the Sushi 4 domain. Disulfide bonds link cysteine 834–cysteine 875, cysteine 860–cysteine 891, and cysteine 895–cysteine 921. The region spanning 895 to 1003 (CGGHFSAPSG…NGFKIHYESV (109 aa)) is the CUB 5 domain. An N-linked (GlcNAc...) asparagine glycan is attached at asparagine 966. Residues 1008–1065 (YSCLDPGIPVHGRRYGHDFSIGSTVSFSCDPGYRLSHEEPLLCEKNHWWSHPLPTCDA) enclose the Sushi 5 domain. 3 cysteine pairs are disulfide-bonded: cysteine 1010–cysteine 1050, cysteine 1036–cysteine 1063, and cysteine 1067–cysteine 1093. A CUB 6 domain is found at 1067–1177 (CGGDVRGPSG…EGFNITFSEY (111 aa)). Residues asparagine 1092, asparagine 1126, and asparagine 1171 are each glycosylated (N-linked (GlcNAc...) asparagine). Residues 1180-1239 (EPCEDPGIPQYGSRVGFSFGVGDTLTFSCSLGYRLEGSSEIICLGGGRRVWSAPLPRCVA) form the Sushi 6 domain. 3 disulfides stabilise this stretch: cysteine 1182/cysteine 1222, cysteine 1208/cysteine 1237, and cysteine 1241/cysteine 1267. Residues 1241 to 1349 (CGASATNNEG…EGFQLVYTSF (109 aa)) enclose the CUB 7 domain. Asparagine 1280 carries an N-linked (GlcNAc...) asparagine glycan. In terms of domain architecture, Sushi 7 spans 1352–1412 (SHCEDPGIPQ…WDYPLPSCIA (61 aa)). 12 disulfide bridges follow: cysteine 1354–cysteine 1395, cysteine 1381–cysteine 1410, cysteine 1414–cysteine 1441, cysteine 1528–cysteine 1568, cysteine 1554–cysteine 1584, cysteine 1588–cysteine 1614, cysteine 1701–cysteine 1741, cysteine 1727–cysteine 1758, cysteine 1762–cysteine 1788, cysteine 1878–cysteine 1918, cysteine 1904–cysteine 1935, and cysteine 1939–cysteine 1965. Residues 1414–1523 (CGGRFKGESS…SGFAIQFSSS (110 aa)) enclose the CUB 8 domain. The 61-residue stretch at 1526–1586 (TACRDPGVPM…WQPSPPVCIA (61 aa)) folds into the Sushi 8 domain. A glycan (N-linked (GlcNAc...) asparagine) is linked at asparagine 1536. Residues 1588-1696 (CGGNLTGSSG…TGFHLEYKAK (109 aa)) enclose the CUB 9 domain. N-linked (GlcNAc...) asparagine glycans are attached at residues asparagine 1591 and asparagine 1709. One can recognise a Sushi 9 domain in the interval 1699 to 1760 (ESCFDPGNIM…WNRVLPSCHA (62 aa)). In terms of domain architecture, CUB 10 spans 1762 to 1870 (CGSRSTGSEG…KGFHFVYQAV (109 aa)). N-linked (GlcNAc...) asparagine glycosylation occurs at asparagine 1781. The region spanning 1876-1937 (TQCSSVPEPR…WNDSLPTCIV (62 aa)) is the Sushi 10 domain. Asparagine 1929 carries an N-linked (GlcNAc...) asparagine glycan. A CUB 11 domain is found at 1939-2047 (CGGILTKRKG…AGFHLEYTAI (109 aa)). Asparagine 2019 is a glycosylation site (N-linked (GlcNAc...) asparagine). A Sushi 11 domain is found at 2050–2109 (DSCPEPQTPSSGIKVGDRYMVGDVVSFQCDQGYSLQGHSHITCMPGPVRRWNYPIPICLA). 3 disulfide bridges follow: cysteine 2052-cysteine 2092, cysteine 2078-cysteine 2107, and cysteine 2111-cysteine 2137. In terms of domain architecture, CUB 12 spans 2111 to 2219 (CGGAMSDFSG…QGFHIVYQAY (109 aa)). Asparagine 2155 is a glycosylation site (N-linked (GlcNAc...) asparagine). The region spanning 2222-2281 (QSCPDPRPFRNGFVIGNDFTVGQTISFECFPGYTLIGNSALTCLHGVSRNWNHPLPRCEA) is the Sushi 12 domain. 36 cysteine pairs are disulfide-bonded: cysteine 2224–cysteine 2264, cysteine 2250–cysteine 2279, cysteine 2283–cysteine 2309, cysteine 2395–cysteine 2437, cysteine 2423–cysteine 2452, cysteine 2456–cysteine 2484, cysteine 2569–cysteine 2610, cysteine 2596–cysteine 2627, cysteine 2632–cysteine 2674, cysteine 2658–cysteine 2689, cysteine 2694–cysteine 2739, cysteine 2725–cysteine 2754, cysteine 2759–cysteine 2799, cysteine 2785–cysteine 2812, cysteine 2817–cysteine 2857, cysteine 2843–cysteine 2870, cysteine 2875–cysteine 2915, cysteine 2901–cysteine 2928, cysteine 2933–cysteine 2977, cysteine 2963–cysteine 2990, cysteine 2995–cysteine 3035, cysteine 3021–cysteine 3048, cysteine 3056–cysteine 3096, cysteine 3082–cysteine 3109, cysteine 3114–cysteine 3155, cysteine 3141–cysteine 3168, cysteine 3173–cysteine 3215, cysteine 3199–cysteine 3228, cysteine 3233–cysteine 3273, cysteine 3259–cysteine 3286, cysteine 3291–cysteine 3331, cysteine 3317–cysteine 3344, cysteine 3352–cysteine 3393, cysteine 3379–cysteine 3406, cysteine 3411–cysteine 3453, and cysteine 3438–cysteine 3466. Residues 2283–2394 (CGGNITAMNG…LSYHAYQLRV (112 aa)) enclose the CUB 13 domain. 2 N-linked (GlcNAc...) asparagine glycosylation sites follow: asparagine 2286 and asparagine 2291. Positions 2393–2454 (RVCQPPPPVP…MDGAPPVCQV (62 aa)) constitute a Sushi 13 domain. The CUB 14 domain occupies 2456–2567 (CPANELRLDS…KGFRIRYIAF (112 aa)). 15 Sushi domains span residues 2567-2629 (FYCS…ACQA), 2630-2691 (ISCG…RCVV), 2692-2756 (VTCP…YCQI), 2757-2814 (ISCG…RCLA), 2815-2872 (GHCG…SCVP), 2873-2930 (VSCG…VCKV), 2931-2992 (VNCS…ECIM), 2993-3050 (IDCG…HCSG), 3054-3111 (GTCG…ECKA), 3112-3170 (VQCG…NCTI), 3171-3230 (ISCG…TCRA), 3231-3288 (VTCS…QCLP), 3289-3346 (KFCG…HCIE), 3350-3408 (TSCE…ECIP), and 3409-3468 (HSCK…VCEA). Positions 3052 to 3065 (TTGTCGDPGTPGHG) are enriched in low complexity. The segment at 3052 to 3071 (TTGTCGDPGTPGHGSRQESD) is disordered. The helical transmembrane segment at 3631–3651 (VAIAILVPFFALIFAGFGFYL) threads the bilayer. The Cytoplasmic segment spans residues 3652–3707 (YKQRTAPKTQYTGCSVHENNNGQAAFENPMYDTNAKSVEGKAVRFDPNLNTVCTMV).

This sequence belongs to the CSMD family. Expressed in the apical dendrites of postnatal hippocampal neurons (at protein level).

It localises to the cell membrane. Functionally, involved in dendrite development. This Mus musculus (Mouse) protein is CUB and sushi domain-containing protein 3 (Csmd3).